We begin with the raw amino-acid sequence, 217 residues long: MGQKIHPLGFRLGITQDHRSHWFAKPAQYRQLLQEDNSIRNFLRTKLINAGIARIDIQRKADQVEIEVRTARPGLIVGRSGKGVENLLRDLQEQFKNKRRFRITITYIPEPDLESTLIAEFIAQRLEARAPFRRAMRQAIQRATRAGVEGIKIQVAGRLNGAEIARSEWVREGRVPLQTLRANIDYSYCQAKTIYGILGIKVWMFKGEKFSSKAVTT.

The 71-residue stretch at Ile-39 to Pro-109 folds into the KH type-2 domain.

It belongs to the universal ribosomal protein uS3 family. As to quaternary structure, part of the 30S ribosomal subunit.

The protein localises to the plastid. It localises to the chloroplast. This is Small ribosomal subunit protein uS3c (rps3) from Chlorokybus atmophyticus (Soil alga).